The following is a 148-amino-acid chain: Protein Turandot Z (148 aa).

Residues 1 to 23 form the signal peptide; it reads MYFAIRLSFVLAVLFCLTGNGSA.

Belongs to the Turandot family.

It is found in the secreted. In terms of biological role, a humoral factor that may play a role in stress tolerance. The chain is Protein Turandot Z from Drosophila sechellia (Fruit fly).